Reading from the N-terminus, the 388-residue chain is S-adenosylmethionine synthase (388 aa).

Residue His-16 participates in ATP binding. Residue Asp-18 coordinates Mg(2+). Glu-44 provides a ligand contact to K(+). The L-methionine site is built by Glu-57 and Gln-100. Positions 100–110 (QSPEIAQGVDR) are flexible loop. ATP is bound by residues 165–167 (DAK), Asp-240, 246–247 (RK), Ala-263, and Lys-267. Asp-240 serves as a coordination point for L-methionine. Residue Lys-271 participates in L-methionine binding.

The protein belongs to the AdoMet synthase family. Homotetramer; dimer of dimers. The cofactor is Mg(2+). It depends on K(+) as a cofactor.

The protein localises to the cytoplasm. It catalyses the reaction L-methionine + ATP + H2O = S-adenosyl-L-methionine + phosphate + diphosphate. The protein operates within amino-acid biosynthesis; S-adenosyl-L-methionine biosynthesis; S-adenosyl-L-methionine from L-methionine: step 1/1. Its function is as follows. Catalyzes the formation of S-adenosylmethionine (AdoMet) from methionine and ATP. The overall synthetic reaction is composed of two sequential steps, AdoMet formation and the subsequent tripolyphosphate hydrolysis which occurs prior to release of AdoMet from the enzyme. The protein is S-adenosylmethionine synthase of Acinetobacter baylyi (strain ATCC 33305 / BD413 / ADP1).